The sequence spans 384 residues: S-adenosylmethionine synthase (384 aa).

Residue histidine 15 participates in ATP binding. Aspartate 17 is a Mg(2+) binding site. Glutamate 43 provides a ligand contact to K(+). The L-methionine site is built by glutamate 56 and glutamine 99. The interval 99-109 is flexible loop; sequence QSPDINQGVDR. ATP-binding positions include 164–166, 231–232, aspartate 240, 246–247, alanine 263, and lysine 267; these read DAK, RF, and RK. Aspartate 240 contacts L-methionine. Residue lysine 271 coordinates L-methionine.

Belongs to the AdoMet synthase family. As to quaternary structure, homotetramer; dimer of dimers. Mg(2+) serves as cofactor. Requires K(+) as cofactor.

Its subcellular location is the cytoplasm. The catalysed reaction is L-methionine + ATP + H2O = S-adenosyl-L-methionine + phosphate + diphosphate. It functions in the pathway amino-acid biosynthesis; S-adenosyl-L-methionine biosynthesis; S-adenosyl-L-methionine from L-methionine: step 1/1. Functionally, catalyzes the formation of S-adenosylmethionine (AdoMet) from methionine and ATP. The overall synthetic reaction is composed of two sequential steps, AdoMet formation and the subsequent tripolyphosphate hydrolysis which occurs prior to release of AdoMet from the enzyme. This is S-adenosylmethionine synthase from Shewanella halifaxensis (strain HAW-EB4).